A 97-amino-acid polypeptide reads, in one-letter code: Large ribosomal subunit protein uL23 (97 aa).

Belongs to the universal ribosomal protein uL23 family. In terms of assembly, part of the 50S ribosomal subunit. Contacts protein L29, and trigger factor when it is bound to the ribosome.

One of the early assembly proteins it binds 23S rRNA. One of the proteins that surrounds the polypeptide exit tunnel on the outside of the ribosome. Forms the main docking site for trigger factor binding to the ribosome. The polypeptide is Large ribosomal subunit protein uL23 (Methylococcus capsulatus (strain ATCC 33009 / NCIMB 11132 / Bath)).